The following is a 204-amino-acid chain: Small ribosomal subunit protein uS4 (204 aa).

The region spanning 93 to 156 is the S4 RNA-binding domain; the sequence is SRLSSVLYHS…AKIPVVVEAE (64 aa).

The protein belongs to the universal ribosomal protein uS4 family. As to quaternary structure, part of the 30S ribosomal subunit. Contacts protein S5. The interaction surface between S4 and S5 is involved in control of translational fidelity.

One of the primary rRNA binding proteins, it binds directly to 16S rRNA where it nucleates assembly of the body of the 30S subunit. In terms of biological role, with S5 and S12 plays an important role in translational accuracy. The sequence is that of Small ribosomal subunit protein uS4 from Wolbachia pipientis wMel.